A 158-amino-acid polypeptide reads, in one-letter code: D-aminoacyl-tRNA deacylase (158 aa).

Positions 144–145 (GP) match the Gly-cisPro motif, important for rejection of L-amino acids motif.

The protein belongs to the DTD family. Homodimer.

The protein resides in the cytoplasm. The catalysed reaction is glycyl-tRNA(Ala) + H2O = tRNA(Ala) + glycine + H(+). It catalyses the reaction a D-aminoacyl-tRNA + H2O = a tRNA + a D-alpha-amino acid + H(+). In terms of biological role, an aminoacyl-tRNA editing enzyme that deacylates mischarged D-aminoacyl-tRNAs. Also deacylates mischarged glycyl-tRNA(Ala), protecting cells against glycine mischarging by AlaRS. Acts via tRNA-based rather than protein-based catalysis; rejects L-amino acids rather than detecting D-amino acids in the active site. By recycling D-aminoacyl-tRNA to D-amino acids and free tRNA molecules, this enzyme counteracts the toxicity associated with the formation of D-aminoacyl-tRNA entities in vivo and helps enforce protein L-homochirality. The protein is D-aminoacyl-tRNA deacylase of Corynebacterium kroppenstedtii (strain DSM 44385 / JCM 11950 / CIP 105744 / CCUG 35717).